A 602-amino-acid polypeptide reads, in one-letter code: RecBCD enzyme subunit RecD (602 aa).

Residue 174–181 (GGPGTGKT) participates in ATP binding.

This sequence belongs to the RecD family. In terms of assembly, heterotrimer of RecB, RecC and RecD. All subunits contribute to DNA-binding.

The catalysed reaction is Couples ATP hydrolysis with the unwinding of duplex DNA at the replication fork by translocating in the 5'-3' direction. This creates two antiparallel DNA single strands (ssDNA). The leading ssDNA polymer is the template for DNA polymerase III holoenzyme which synthesizes a continuous strand.. It carries out the reaction ATP + H2O = ADP + phosphate + H(+). Functionally, a helicase/nuclease that prepares dsDNA breaks (DSB) for recombinational DNA repair. Binds to DSBs and unwinds DNA via a highly rapid and processive ATP-dependent bidirectional helicase activity. Unwinds dsDNA until it encounters a Chi (crossover hotspot instigator) sequence from the 3' direction. Cuts ssDNA a few nucleotides 3' to the Chi site. The properties and activities of the enzyme are changed at Chi. The Chi-altered holoenzyme produces a long 3'-ssDNA overhang and facilitates RecA-binding to the ssDNA for homologous DNA recombination and repair. Holoenzyme degrades any linearized DNA that is unable to undergo homologous recombination. In the holoenzyme this subunit has ssDNA-dependent ATPase and 5'-3' helicase activity. When added to pre-assembled RecBC greatly stimulates nuclease activity and augments holoenzyme processivity. Negatively regulates the RecA-loading ability of RecBCD. This is RecBCD enzyme subunit RecD from Buchnera aphidicola subsp. Schizaphis graminum (strain Sg).